The sequence spans 410 residues: MARTKFERTKPHVNIGTIGHVDHGKTTLTAAISAVLASKDNTVQLKKFEEIDSAPEERARGITINTSHVEYQTEKRHYAHVDCPGHADYVKNMITGAAQMDGAILVVSAADGPMPQTREHILLAKQVGVPSIVVFLNKADMVDDPELLELVELEVRELLSKYDFPGDTIPFVTGSALLALEACMKNPKIGEGKDKWVDKIFELMKIVDEYIPTPQRDVDKSFLMAVEDVFSITGRGTVATGRIERGRVKVGETIEIVGLKNTKTTTVTGLEMFQKTLDEGIAGDNVGVLLRGVQKTDIERGMVLAKPGSITPHTKFEAEVYVLTKEEGGRHTPFFPGYRPQFYVRTTDVTGTIEDFTADDGSKAEMVMPGDRIKMCVNLIYPVAIEQGMRFAIREGGRTVGAGVVTKILE.

The 206-residue stretch at 10–215 (KPHVNIGTIG…IVDEYIPTPQ (206 aa)) folds into the tr-type G domain. A G1 region spans residues 19–26 (GHVDHGKT). A GTP-binding site is contributed by 19–26 (GHVDHGKT). Residue Thr-26 participates in Mg(2+) binding. The segment at 61–65 (GITIN) is G2. The interval 82 to 85 (DCPG) is G3. GTP-binding positions include 82–86 (DCPGH) and 137–140 (NKAD). The interval 137–140 (NKAD) is G4. A G5 region spans residues 175–177 (SAL).

This sequence belongs to the TRAFAC class translation factor GTPase superfamily. Classic translation factor GTPase family. EF-Tu/EF-1A subfamily.

It localises to the plastid. The protein localises to the chloroplast. It catalyses the reaction GTP + H2O = GDP + phosphate + H(+). In terms of biological role, GTP hydrolase that promotes the GTP-dependent binding of aminoacyl-tRNA to the A-site of ribosomes during protein biosynthesis. The polypeptide is Elongation factor Tu, chloroplastic (tufA) (Cyanidioschyzon merolae (strain NIES-3377 / 10D) (Unicellular red alga)).